A 634-amino-acid chain; its full sequence is DNA-directed RNA polymerase subunit gamma (634 aa).

Zn(2+) contacts are provided by cysteine 74, cysteine 76, cysteine 89, and cysteine 92. Mg(2+) contacts are provided by aspartate 471, aspartate 473, and aspartate 475.

It belongs to the RNA polymerase beta' chain family. RpoC1 subfamily. As to quaternary structure, in cyanobacteria the RNAP catalytic core is composed of 2 alpha, 1 beta, 1 beta', 1 gamma and 1 omega subunit. When a sigma factor is associated with the core the holoenzyme is formed, which can initiate transcription. Requires Mg(2+) as cofactor. Zn(2+) serves as cofactor.

It carries out the reaction RNA(n) + a ribonucleoside 5'-triphosphate = RNA(n+1) + diphosphate. Its function is as follows. DNA-dependent RNA polymerase catalyzes the transcription of DNA into RNA using the four ribonucleoside triphosphates as substrates. This is DNA-directed RNA polymerase subunit gamma from Synechococcus sp. (strain WH7803).